A 563-amino-acid polypeptide reads, in one-letter code: Secreted lipase ARB07186/07185 (563 aa).

Positions 1–20 (MAKYDFVMLWILTLTAAIAA) are cleaved as a signal peptide. C83 and C101 are disulfide-bonded. S215 (acyl-ester intermediate) is an active-site residue. A disulfide bridge links C268 with C281.

Belongs to the type-B carboxylesterase/lipase family.

The protein resides in the secreted. It carries out the reaction a triacylglycerol + H2O = a diacylglycerol + a fatty acid + H(+). The chain is Secreted lipase ARB07186/07185 from Arthroderma benhamiae (strain ATCC MYA-4681 / CBS 112371) (Trichophyton mentagrophytes).